Consider the following 270-residue polypeptide: uncharacterized protein (270 aa).

The interval 235–270 (LADSDLEADSDDSESFEFVENPEPSENGSEPTIKND) is disordered. Over residues 238–251 (SDLEADSDDSESFE) the composition is skewed to acidic residues. Positions 255-270 (NPEPSENGSEPTIKND) are enriched in low complexity.

This is an uncharacterized protein from Halorubrum sp. PV6 (HRPV-1).